We begin with the raw amino-acid sequence, 315 residues long: Ribosomal RNA small subunit methyltransferase H (315 aa).

S-adenosyl-L-methionine is bound by residues 61 to 63, Asp-80, Phe-108, Asp-124, and Gln-131; that span reads GGH. A disordered region spans residues 291 to 315; the sequence is PQPEEEEKNPRSRSAKLRFAQRKPL. Residues 301-315 show a composition bias toward basic residues; sequence RSRSAKLRFAQRKPL.

The protein belongs to the methyltransferase superfamily. RsmH family.

The protein resides in the cytoplasm. The enzyme catalyses cytidine(1402) in 16S rRNA + S-adenosyl-L-methionine = N(4)-methylcytidine(1402) in 16S rRNA + S-adenosyl-L-homocysteine + H(+). Specifically methylates the N4 position of cytidine in position 1402 (C1402) of 16S rRNA. The chain is Ribosomal RNA small subunit methyltransferase H from Crocosphaera subtropica (strain ATCC 51142 / BH68) (Cyanothece sp. (strain ATCC 51142)).